Consider the following 112-residue polypeptide: Large ribosomal subunit protein uL18 (112 aa).

This sequence belongs to the universal ribosomal protein uL18 family. In terms of assembly, part of the 50S ribosomal subunit; part of the 5S rRNA/L5/L18/L25 subcomplex. Contacts the 5S and 23S rRNAs.

This is one of the proteins that bind and probably mediate the attachment of the 5S RNA into the large ribosomal subunit, where it forms part of the central protuberance. In Deinococcus deserti (strain DSM 17065 / CIP 109153 / LMG 22923 / VCD115), this protein is Large ribosomal subunit protein uL18.